The sequence spans 131 residues: Cyclin-dependent kinase 4 inhibitor B (131 aa).

ANK repeat units lie at residues 6-35 (GGDADLANAAARGQVEAVRQLLEAGVDPNR), 39-67 (FGRRPIQVMMMGSARVAELLLLHGADPNC), 72-101 (TLTRPVHDAAREGFLDTLVALHRAGGRLDV), and 105-131 (WGRLPVDLAEERGHRDVARYLRATAGD).

It belongs to the CDKN2 cyclin-dependent kinase inhibitor family. Heterodimer of CDKN2B with CDK4 or CDK6.

Its function is as follows. Interacts strongly with CDK4 and CDK6. Potent inhibitor. Potential effector of TGF-beta induced cell cycle arrest. The chain is Cyclin-dependent kinase 4 inhibitor B (CDKN2B) from Bos taurus (Bovine).